Consider the following 151-residue polypeptide: Globin-2 B chain (151 aa).

Serine 1 carries the N-acetylserine modification. The region spanning 11 to 151 (VSNADQKDLL…SLVAVVQASL (141 aa)) is the Globin domain. Histidine 103 serves as a coordination point for heme b.

Belongs to the globin family. In terms of assembly, heterotetramer of two alpha chains and two beta chains.

The chain is Globin-2 B chain from Anadara inaequivalvis (Inequivalve ark).